A 278-amino-acid polypeptide reads, in one-letter code: Transmembrane protein 45B (278 aa).

Transmembrane regions (helical) follow at residues 7-27 (HALP…KYPL), 49-69 (IIEG…EQFV), 95-115 (YLFF…FNIV), 117-137 (LGLD…LFYF), 149-169 (IHSL…LEVI), 183-203 (LLIL…PPFG), and 215-235 (VMFI…ITAI). Ser273 and Ser275 each carry phosphoserine.

This sequence belongs to the TMEM45 family.

The protein localises to the endosome membrane. It is found in the lysosome membrane. Its subcellular location is the golgi apparatus. It localises to the trans-Golgi network membrane. Functionally, plays a role in innate immunity. The sequence is that of Transmembrane protein 45B (Tmem45b) from Rattus norvegicus (Rat).